The primary structure comprises 537 residues: Chaperonin GroEL (537 aa).

ATP-binding positions include 31–34 (TLGP), 87–91 (DGTTT), Gly415, and Asp495.

This sequence belongs to the chaperonin (HSP60) family. As to quaternary structure, forms a cylinder of 14 subunits composed of two heptameric rings stacked back-to-back. Interacts with the co-chaperonin GroES.

The protein localises to the cytoplasm. It catalyses the reaction ATP + H2O + a folded polypeptide = ADP + phosphate + an unfolded polypeptide.. Together with its co-chaperonin GroES, plays an essential role in assisting protein folding. The GroEL-GroES system forms a nano-cage that allows encapsulation of the non-native substrate proteins and provides a physical environment optimized to promote and accelerate protein folding. The chain is Chaperonin GroEL from Methanoregula boonei (strain DSM 21154 / JCM 14090 / 6A8).